Reading from the N-terminus, the 592-residue chain is Condensin-2 complex subunit H2 (592 aa).

2 disordered regions span residues 89–116 (NKKR…DGCE) and 261–285 (EAPS…PKQL). The segment covering 96-108 (GSSSDGNQEQAPS) has biased composition (polar residues).

Belongs to the CND2 H2 (condensin-2 subunit 2) family. In terms of assembly, component of the condensin-2 complex, which contains the smc2 and smc4 heterodimer, and three non SMC subunits, ncapg2, ncaph2 and ncapd3 that probably regulate the complex.

It is found in the nucleus. In terms of biological role, regulatory subunit of the condensin-2 complex, a complex that seems to provide chromosomes with an additional level of organization and rigidity and in establishing mitotic chromosome architecture. This chain is Condensin-2 complex subunit H2 (ncaph2), found in Danio rerio (Zebrafish).